We begin with the raw amino-acid sequence, 449 residues long: Mannan endo-1,6-alpha-mannosidase DCW1 (449 aa).

The first 21 residues, 1–21 (MLVNKVIGLLGVLFATRFTNA), serve as a signal peptide directing secretion. 12 N-linked (GlcNAc...) asparagine glycosylation sites follow: asparagine 34, asparagine 84, asparagine 109, asparagine 133, asparagine 203, asparagine 225, asparagine 240, asparagine 265, asparagine 281, asparagine 337, asparagine 362, and asparagine 420. Residue glycine 428 is the site of GPI-anchor amidated glycine attachment. Positions 429 to 449 (AGIITAVIGISIVACALWLVF) are cleaved as a propeptide — removed in mature form.

It belongs to the glycosyl hydrolase 76 family.

It localises to the cell membrane. The catalysed reaction is Random hydrolysis of (1-&gt;6)-alpha-D-mannosidic linkages in unbranched (1-&gt;6)-mannans.. Functionally, required for normal synthesis of the cell wall. This chain is Mannan endo-1,6-alpha-mannosidase DCW1 (DCW1), found in Saccharomyces cerevisiae (strain ATCC 204508 / S288c) (Baker's yeast).